Here is a 64-residue protein sequence, read N- to C-terminus: Large ribosomal subunit protein bL35 (64 aa).

Residues 1 to 10 (MPKMKTNSAA) show a composition bias toward polar residues. The tract at residues 1 to 64 (MPKMKTNSAA…SKNMKKLLGR (64 aa)) is disordered.

The protein belongs to the bacterial ribosomal protein bL35 family.

This Bifidobacterium adolescentis (strain ATCC 15703 / DSM 20083 / NCTC 11814 / E194a) protein is Large ribosomal subunit protein bL35.